Reading from the N-terminus, the 591-residue chain is MMRSHYCGALNRSHVGQTVTLSGWVHRVRNLGRFIFMQIRDREGIVQVFFDEKDEAIFKIASSLRSEACVQIQGEVIARDESQINKEMATGEIEVLVKNVVVYNNADVLPLDFNQNNTEEQRLKYRYLDLRRPEMAEKLKTRAKITSFVRRYMDDNGFLDIETPMLTKATPEGARDYLVPSRVHNGKFYALPQSPQLFKQLLMMSGFDRYYQIVKCFRDEDLRADRQPEFTQIDVETSFLTAEEVRELMENMIHGLWLDRLNVDLGKFPIMTWQEAMQRFGSDKPDLRNPLELVDVADILKDVEFKVFNEPANSADGRVTVLRVPNGASLTRKQIDEYTQFVGIYGAKGLAWAKINDVNAGMEGIQSPVAKFLNEEVFKALIERTNATSGDILFFGADKWQVVTDSMGALRLKVGRDLALTDLSAWKPLWVIDFPMFEKDDEGNLSAMHHPFTSPKNLTPEELAANPVNAVANAYDMVINGYEVGGGSVRIYDPKMQQTVFGILGINEQDQQEKFGFLLDALKFGTPPHAGLAFGLDRLTMLITGTENIRDVIAFPKTTAAACLMTEAPSFANPQALEELGIAVLKKEKAE.

Glutamate 172 contacts L-aspartate. Positions 196-199 are aspartate; that stretch reads QLFK. Arginine 218 provides a ligand contact to L-aspartate. Residues 218 to 220 and glutamine 227 each bind ATP; that span reads RDE. Histidine 449 contacts L-aspartate. ATP is bound at residue glutamate 483. Position 490 (arginine 490) interacts with L-aspartate. ATP is bound at residue 535–538; that stretch reads GLDR.

The protein belongs to the class-II aminoacyl-tRNA synthetase family. Type 1 subfamily. In terms of assembly, homodimer.

It is found in the cytoplasm. It carries out the reaction tRNA(Asp) + L-aspartate + ATP = L-aspartyl-tRNA(Asp) + AMP + diphosphate. In terms of biological role, catalyzes the attachment of L-aspartate to tRNA(Asp) in a two-step reaction: L-aspartate is first activated by ATP to form Asp-AMP and then transferred to the acceptor end of tRNA(Asp). The protein is Aspartate--tRNA ligase of Actinobacillus pleuropneumoniae serotype 7 (strain AP76).